Reading from the N-terminus, the 1135-residue chain is Vinculin (1135 aa).

The interval 2–835 (PVFHTRTIES…GAVAKVREAF (834 aa)) is N-terminal globular head. Phosphotyrosine is present on Tyr100. The tract at residues 168–208 (MTKMAKMIDERQQELTHQEHRVMLVNSMNTVKELLPVLISA) is talin-interaction. Tandem repeats lie at residues 259 to 369 (ASKD…KVEN), 370 to 479 (AARK…KTNR), and 480 to 589 (AVAN…RMQE). Residues 259-589 (ASKDTEAMKR…LKDLKARMQE (331 aa)) are 3 X 112 AA tandem repeats. Tyr537 and Tyr822 each carry phosphotyrosine. A linker (Pro-rich) region spans residues 836–878 (QPQEPDFPPPPPDLEHLHLTDELAPPKPPLPEGEVPPPRPPPP). The disordered stretch occupies residues 837–888 (PQEPDFPPPPPDLEHLHLTDELAPPKPPLPEGEVPPPRPPPPEEKDEEFPEQ). Positions 860–876 (PPKPPLPEGEVPPPRPP) are enriched in pro residues. The C-terminal tail stretch occupies residues 879–1135 (EEKDEEFPEQ…RWVRKTPWYQ (257 aa)). Facilitates phospholipid membrane insertion stretches follow at residues 1004–1047 (RLVR…KRIR) and 1121–1135 (AGFT…PWYQ). Tyr1134 is modified (phosphotyrosine; by SRC-type Tyr-kinases).

It belongs to the vinculin/alpha-catenin family. As to quaternary structure, exhibits self-association properties. Interacts with APBB1IP, NRAP and TLN1. Interacts with CTNNB1 and this interaction is necessary for its localization to the cell-cell junctions and for its function in regulating cell surface expression of E-cadherin. Phosphorylated; on serines, threonines and tyrosines. Phosphorylation on Tyr-1134 in activated platelets affects head-tail interactions and cell spreading but has no effect on actin binding nor on localization to focal adhesion plaques. Post-translationally, acetylated; mainly by myristic acid but also by a small amount of palmitic acid. Isoform Metavinculin is muscle-specific.

Its subcellular location is the cell membrane. The protein resides in the cell junction. It is found in the adherens junction. The protein localises to the focal adhesion. It localises to the cytoplasm. Its subcellular location is the cytoskeleton. The protein resides in the sarcolemma. It is found in the cell projection. The protein localises to the podosome. Its function is as follows. Actin filament (F-actin)-binding protein involved in cell-matrix adhesion and cell-cell adhesion. Regulates cell-surface E-cadherin expression and potentiates mechanosensing by the E-cadherin complex. May also play important roles in cell morphology and locomotion. This Gallus gallus (Chicken) protein is Vinculin (VCL).